Consider the following 148-residue polypeptide: Transcriptional regulator MraZ (148 aa).

2 SpoVT-AbrB domains span residues 5 to 51 and 80 to 123; these read STQL…PQPV and ASDV…DMAK.

Belongs to the MraZ family. In terms of assembly, forms oligomers.

Its subcellular location is the cytoplasm. The protein resides in the nucleoid. This is Transcriptional regulator MraZ from Nitrosomonas europaea (strain ATCC 19718 / CIP 103999 / KCTC 2705 / NBRC 14298).